A 62-amino-acid chain; its full sequence is Large ribosomal subunit protein bL32 (62 aa).

Belongs to the bacterial ribosomal protein bL32 family.

In Treponema denticola (strain ATCC 35405 / DSM 14222 / CIP 103919 / JCM 8153 / KCTC 15104), this protein is Large ribosomal subunit protein bL32.